The following is a 258-amino-acid chain: Adenosylcobinamide-GDP ribazoletransferase (258 aa).

6 helical membrane passes run 41–61 (FFPLVGWLVGAAGALAYWLAS), 65–85 (PAPGVAVAASMAATLLLTGAF), 115–135 (IGAFGAIAVCMALLLKWQLLM), 136–156 (AMAAQHAAAAMAAMVAAHAAS), 197–217 (LPLLGFGMACAAIAVAVLLAA), and 236–256 (CLGLAQQVFELLVLWVLLAWT).

This sequence belongs to the CobS family. The cofactor is Mg(2+).

The protein resides in the cell inner membrane. It catalyses the reaction alpha-ribazole + adenosylcob(III)inamide-GDP = adenosylcob(III)alamin + GMP + H(+). It carries out the reaction alpha-ribazole 5'-phosphate + adenosylcob(III)inamide-GDP = adenosylcob(III)alamin 5'-phosphate + GMP + H(+). Its pathway is cofactor biosynthesis; adenosylcobalamin biosynthesis; adenosylcobalamin from cob(II)yrinate a,c-diamide: step 7/7. In terms of biological role, joins adenosylcobinamide-GDP and alpha-ribazole to generate adenosylcobalamin (Ado-cobalamin). Also synthesizes adenosylcobalamin 5'-phosphate from adenosylcobinamide-GDP and alpha-ribazole 5'-phosphate. The chain is Adenosylcobinamide-GDP ribazoletransferase from Ralstonia nicotianae (strain ATCC BAA-1114 / GMI1000) (Ralstonia solanacearum).